A 142-amino-acid chain; its full sequence is Large ribosomal subunit protein uL11 (142 aa).

It belongs to the universal ribosomal protein uL11 family. As to quaternary structure, part of the ribosomal stalk of the 50S ribosomal subunit. Interacts with L10 and the large rRNA to form the base of the stalk. L10 forms an elongated spine to which L12 dimers bind in a sequential fashion forming a multimeric L10(L12)X complex. One or more lysine residues are methylated.

In terms of biological role, forms part of the ribosomal stalk which helps the ribosome interact with GTP-bound translation factors. In Dictyoglomus turgidum (strain DSM 6724 / Z-1310), this protein is Large ribosomal subunit protein uL11.